A 126-amino-acid polypeptide reads, in one-letter code: C-type natriuretic peptide (126 aa).

Residues 1-23 form the signal peptide; it reads MHLSQLIACALLLALLSLRPSEA. The interval 20–73 is disordered; the sequence is PSEAKPGTPPKVPRTPPGEELADSQAAGGNQKKGDKTPGSGGANLKGDRSRLLR. The propeptide occupies 24 to 73; it reads KPGTPPKVPRTPPGEELADSQAAGGNQKKGDKTPGSGGANLKGDRSRLLR. Over residues 26-35 the composition is skewed to pro residues; it reads GTPPKVPRTP. The cysteines at positions 110 and 126 are disulfide-linked.

The protein belongs to the natriuretic peptide family. Degraded by IDE (in vitro).

Its subcellular location is the secreted. Hormone which plays a role in endochondral ossification through regulation of cartilaginous growth plate chondrocytes proliferation and differentiation. May also be vasoactive and natriuretic. Acts by specifically binding and stimulating NPR2 to produce cGMP. Binds the clearance receptor NPR3. This Mus musculus (Mouse) protein is C-type natriuretic peptide (Nppc).